We begin with the raw amino-acid sequence, 357 residues long: Putative diaminopimelate epimerase, chloroplastic (357 aa).

A chloroplast-targeting transit peptide spans 1-47; it reads MSSATAAATATIAAAAAAAAKLAATPAPAPSRRRLTLRGNPTARRCV. Active-site residues include C145 and C300.

It belongs to the diaminopimelate epimerase family.

The protein localises to the plastid. It is found in the chloroplast. It carries out the reaction (2S,6S)-2,6-diaminopimelate = meso-2,6-diaminopimelate. It functions in the pathway amino-acid biosynthesis; L-lysine biosynthesis via DAP pathway; DL-2,6-diaminopimelate from LL-2,6-diaminopimelate: step 1/1. This chain is Putative diaminopimelate epimerase, chloroplastic (DAPF), found in Oryza sativa subsp. indica (Rice).